The following is a 162-amino-acid chain: Transcriptional repressor NrdR (162 aa).

Residues M1–D21 are disordered. A zinc finger lies at C3–C34. The ATP-cone domain occupies L49 to E139.

This sequence belongs to the NrdR family. It depends on Zn(2+) as a cofactor.

In terms of biological role, negatively regulates transcription of bacterial ribonucleotide reductase nrd genes and operons by binding to NrdR-boxes. The polypeptide is Transcriptional repressor NrdR (Natronomonas pharaonis (strain ATCC 35678 / DSM 2160 / CIP 103997 / JCM 8858 / NBRC 14720 / NCIMB 2260 / Gabara) (Halobacterium pharaonis)).